The following is a 349-amino-acid chain: Anaerobic nitrite reductase Glb1-3 (349 aa).

Globin domains lie at 13 to 162 (GFTE…AEMK) and 184 to 333 (CFTE…AEMK). Heme b contacts are provided by serine 56, lysine 70, histidine 74, lysine 104, threonine 108, histidine 109, serine 227, lysine 241, histidine 245, lysine 275, threonine 279, and histidine 280.

It belongs to the plant globin family. As to quaternary structure, monomer. It depends on heme b as a cofactor.

Its subcellular location is the cytoplasm. It localises to the nucleus. The catalysed reaction is Fe(III)-heme b-[protein] + nitric oxide + H2O = Fe(II)-heme b-[protein] + nitrite + 2 H(+). Functionally, phytoglobin that regulates the fine tuning of nitric oxide (NO) concentration in the cytosol in response to sudden changes in O(2) availability, and performs both symbiotic and nonsymbiotic functions. Exhibits NO dioxygenase activity in the presence of O(2) but nitrite reductase (NiR) activity in the absence of O(2) (e.g. during flooding or in waterlogged soil). May not function as an oxygen storage or transport protein. Extremely reactive toward the physiological ligands O(2), nitric oxide (NO), and nitrite with a very high affinity for O(2) through an hexacoordinate heme iron because of a very low dissociation constant. This Medicago truncatula (Barrel medic) protein is Anaerobic nitrite reductase Glb1-3.